Reading from the N-terminus, the 895-residue chain is Androgen receptor (895 aa).

Residues 1 to 533 (MEVQLGLGRV…PIDYYFPPQK (533 aa)) form a modulating region. The interval 1-562 (MEVQLGLGRV…GSCKVFFKRA (562 aa)) is interaction with ZNF318. 2 disordered regions span residues 33–155 (VIQN…PTFP) and 175–211 (QLLQ…YLGG). Low complexity-rich tracts occupy residues 44–81 (AASA…GSPQ) and 175–200 (QLLQ…ASGA). At S66 the chain carries Phosphoserine; by CDK9. S79 bears the Phosphoserine mark. Positions 201 to 211 (PTSSKDNYLGG) are enriched in polar residues. At Y208 the chain carries Phosphotyrosine; by CSK. S241 is subject to Phosphoserine. Y252 is modified (phosphotyrosine; by CSK and TNK2). A phosphotyrosine; by CSK mark is found at Y292, Y331, Y342, and Y347. Y348 bears the Phosphotyrosine; by CSK and TNK2 mark. Residue K371 forms a Glycyl lysine isopeptide (Lys-Gly) (interchain with G-Cter in SUMO) linkage. Y378 carries the post-translational modification Phosphotyrosine; by CSK. K496 participates in a covalent cross-link: Glycyl lysine isopeptide (Lys-Gly) (interchain with G-Cter in SUMO). Phosphotyrosine; by CSK occurs at positions 510 and 527. An interaction with LPXN region spans residues 527 to 894 (YYFPPQKTCL…GKVKPIYFHT (368 aa)). The segment at residues 534-607 (TCLICGDEAS…AGMTLGARKL (74 aa)) is a DNA-binding region (nuclear receptor). 2 NR C4-type zinc fingers span residues 535–555 (CLIC…CGSC) and 571–595 (CASR…LRKC). The interval 547–637 (YGALTCGSCK…TEETAQKLTV (91 aa)) is interaction with HIPK3. The interaction with CCAR1 stretch occupies residues 567 to 894 (QKYLCASRND…GKVKPIYFHT (328 aa)). Residues 600 to 894 (MTLGARKLKK…GKVKPIYFHT (295 aa)) are interaction with KAT7. The residue at position 626 (S626) is a Phosphoserine; by STK4/MST1. The NR LBD domain occupies 644 to 875 (ECQPIFLNVL…DFPEMMAEII (232 aa)). Positions 681 and 728 each coordinate 17beta-hydroxy-5alpha-androstan-3-one. Glycyl lysine isopeptide (Lys-Gly) (interchain with G-Cter in ubiquitin) cross-links involve residues K821 and K823. Residue T853 coordinates 17beta-hydroxy-5alpha-androstan-3-one. Phosphotyrosine; by CSK is present on Y891.

It belongs to the nuclear hormone receptor family. NR3 subfamily. As to quaternary structure, binds DNA as a homodimer. Part of a ternary complex containing AR, EFCAB6/DJBP and PARK7. Interacts with HIPK3 and NR0B2 in the presence of androgen. The ligand binding domain interacts with KAT7/HBO1 in the presence of dihydrotestosterone. Interacts with EFCAB6/DJBP, PQBP1, RANBP9, RBAK, SPDEF, SRA1, TGFB1I1 and RREB1. Interacts with ZMIZ1/ZIMP10 and ZMIZ2/ZMIP7 which both enhance its transactivation activity. Interacts with SLC30A9 and RAD54L2/ARIP4. Interacts with MACROD1 (via macro domain). Interacts via the ligand-binding domain with LXXLL and FXXLF motifs from NCOA1, NCOA2, NCOA3 and MAGEA11. Interacts (via nuclear receptor DNA binding domain and nuclear receptor ligand binding domain) with NCOA4. The AR N-terminal poly-Gln region binds Ran resulting in enhancement of AR-mediated transactivation. Ran-binding decreases as the poly-Gln length increases. Interacts with HIP1 (via coiled coil domain). Interacts (via ligand-binding domain) with TRIM68. Interacts with TNK2. Interacts with USP26. Interacts with RNF6. Interacts (regulated by RNF6 probably through polyubiquitination) with RNF14; regulates AR transcriptional activity. Interacts with PRMT2 and TRIM24. Interacts with RACK1. Interacts with RANBP10; this interaction enhances dihydrotestosterone-induced AR transcriptional activity. Interacts with PRPF6 in a hormone-independent way; this interaction enhances dihydrotestosterone-induced AR transcriptional activity. Interacts with STK4/MST1. Interacts with ZIPK/DAPK3. Interacts with LPXN. Interacts with MAK. Part of a complex containing AR, MAK and NCOA3. Interacts with CRY1. Interacts with CCAR1 and GATA2. Interacts with ZNF318. Interacts with BUD31. Interacts with ARID4A. Interacts with ARID4B. Interacts (via NR LBD domain) with ZBTB7A; the interaction is direct and androgen-dependent. Interacts with NCOR1. Interacts with NCOR2. Interacts with CRY2 in a ligand-dependent manner. In terms of processing, phosphorylated in prostate cancer cells in response to several growth factors including EGF. Phosphorylation is induced by c-Src kinase (CSK). Tyr-510 is one of the major phosphorylation sites and an increase in phosphorylation and Src kinase activity is associated with prostate cancer progression. Phosphorylation by TNK2 enhances the DNA-binding and transcriptional activity. Phosphorylation at Ser-66 by CDK9 regulates AR promoter selectivity and cell growth. Post-translationally, sumoylated on Lys-371 (major) and Lys-496. Ubiquitinated. Deubiquitinated by USP26. 'Lys-6' and 'Lys-27'-linked polyubiquitination by RNF6 modulates AR transcriptional activity and specificity. Palmitoylated by ZDHHC7 and ZDHHC21. Palmitoylation is required for plasma membrane targeting and for rapid intracellular signaling via ERK and AKT kinases and cAMP generation.

It localises to the nucleus. Its subcellular location is the cytoplasm. Steroid hormone receptors are ligand-activated transcription factors that regulate eukaryotic gene expression and affect cellular proliferation and differentiation in target tissues. Transcription factor activity is modulated by bound coactivator and corepressor proteins like ZBTB7A that recruits NCOR1 and NCOR2 to the androgen response elements/ARE on target genes, negatively regulating androgen receptor signaling and androgen-induced cell proliferation. Transcription activation is also down-regulated by NR0B2. Activated, but not phosphorylated, by HIPK3 and ZIPK/DAPK3. The chain is Androgen receptor (AR) from Papio hamadryas (Hamadryas baboon).